The chain runs to 157 residues: Transcriptional repressor NrdR (157 aa).

Residues 1–26 (MRCPKCGGSKSSVIDSRQAEDGNTIR) are disordered. Residues 3–34 (CPKCGGSKSSVIDSRQAEDGNTIRRRRECEDC) fold into a zinc finger. Residues 17–26 (RQAEDGNTIR) are compositionally biased toward basic and acidic residues. Positions 49–139 (LVVVKKDGTR…VYRSFKDVGE (91 aa)) constitute an ATP-cone domain.

The protein belongs to the NrdR family. Zn(2+) is required as a cofactor.

Its function is as follows. Negatively regulates transcription of bacterial ribonucleotide reductase nrd genes and operons by binding to NrdR-boxes. The polypeptide is Transcriptional repressor NrdR (Streptococcus gordonii (strain Challis / ATCC 35105 / BCRC 15272 / CH1 / DL1 / V288)).